A 428-amino-acid chain; its full sequence is Enolase (428 aa).

A (2R)-2-phosphoglycerate-binding site is contributed by glutamine 162. Glutamate 204 (proton donor) is an active-site residue. Residues aspartate 241, glutamate 286, and aspartate 313 each coordinate Mg(2+). Lysine 338, arginine 367, serine 368, and lysine 389 together coordinate (2R)-2-phosphoglycerate. Lysine 338 (proton acceptor) is an active-site residue.

The protein belongs to the enolase family. Component of the RNA degradosome, a multiprotein complex involved in RNA processing and mRNA degradation. Requires Mg(2+) as cofactor.

Its subcellular location is the cytoplasm. The protein resides in the secreted. The protein localises to the cell surface. It carries out the reaction (2R)-2-phosphoglycerate = phosphoenolpyruvate + H2O. It participates in carbohydrate degradation; glycolysis; pyruvate from D-glyceraldehyde 3-phosphate: step 4/5. Its function is as follows. Catalyzes the reversible conversion of 2-phosphoglycerate (2-PG) into phosphoenolpyruvate (PEP). It is essential for the degradation of carbohydrates via glycolysis. In Vesicomyosocius okutanii subsp. Calyptogena okutanii (strain HA), this protein is Enolase.